A 368-amino-acid polypeptide reads, in one-letter code: Aspartate-semialdehyde dehydrogenase (368 aa).

NADP(+)-binding positions include arginine 10–valine 13, threonine 37–serine 38, and glutamine 74. Arginine 103 is a phosphate binding site. Cysteine 136 acts as the Acyl-thioester intermediate in catalysis. The residue at position 136 (cysteine 136) is an S-cysteinyl cysteine; in inhibited form. Glutamine 163 serves as a coordination point for substrate. NADP(+) contacts are provided by residues serine 166–glycine 167 and proline 194. Glutamate 242 serves as a coordination point for substrate. Residue lysine 245 coordinates phosphate. Substrate is bound at residue arginine 268. The active-site Proton acceptor is histidine 275. Glutamine 351 is an NADP(+) binding site.

This sequence belongs to the aspartate-semialdehyde dehydrogenase family. Homodimer.

The enzyme catalyses L-aspartate 4-semialdehyde + phosphate + NADP(+) = 4-phospho-L-aspartate + NADPH + H(+). It participates in amino-acid biosynthesis; L-lysine biosynthesis via DAP pathway; (S)-tetrahydrodipicolinate from L-aspartate: step 2/4. Its pathway is amino-acid biosynthesis; L-methionine biosynthesis via de novo pathway; L-homoserine from L-aspartate: step 2/3. It functions in the pathway amino-acid biosynthesis; L-threonine biosynthesis; L-threonine from L-aspartate: step 2/5. Functionally, catalyzes the NADPH-dependent formation of L-aspartate-semialdehyde (L-ASA) by the reductive dephosphorylation of L-aspartyl-4-phosphate. In Salmonella typhi, this protein is Aspartate-semialdehyde dehydrogenase.